The following is a 195-amino-acid chain: Archaetidylinositol phosphate synthase (195 aa).

2 helical membrane-spanning segments follow: residues 27-47 (IALPADYITLTGFLVACAASA) and 54-74 (LITGAALLAASGFIDVLDGAV). The Mg(2+) site is built by Asp-68, Asp-71, Asp-89, and Asp-93. Asp-93 (proton acceptor) is an active-site residue. A run of 2 helical transmembrane segments spans residues 99–119 (IIIIGITAGGFTGLLTGLLAL) and 158–178 (LAGYLIHPWFMDAAIIVLAAL).

The protein belongs to the CDP-alcohol phosphatidyltransferase class-I family. Mn(2+) is required as a cofactor. The cofactor is Mg(2+).

It localises to the cell membrane. The catalysed reaction is CDP-2,3-bis-O-(phytanyl)-sn-glycerol + 1D-myo-inositol 3-phosphate = saturated 1-archaetidyl-1D-myo-inositol 3-phosphate + CMP + H(+). The protein operates within lipid metabolism; phospholipid metabolism. In terms of biological role, catalyzes the formation of archaetidylinositol phosphate (AIP) from CDP-archaeol (CDP-ArOH or CDP-2,3-bis-(O-phytanyl)-sn-glycerol) and 1L-myo-inositol 1-phosphate (IP or 1D-myo-inositol 3-phosphate). AIP is a precursor of archaetidyl-myo-inositol (AI), an ether-type inositol phospholipid ubiquitously distributed in archaea membranes and essential for glycolipid biosynthesis in archaea. The chain is Archaetidylinositol phosphate synthase from Methanothermobacter thermautotrophicus (strain ATCC 29096 / DSM 1053 / JCM 10044 / NBRC 100330 / Delta H) (Methanobacterium thermoautotrophicum).